The following is a 463-amino-acid chain: Argininosuccinate lyase (463 aa).

The protein belongs to the lyase 1 family. Argininosuccinate lyase subfamily.

It is found in the cytoplasm. The enzyme catalyses 2-(N(omega)-L-arginino)succinate = fumarate + L-arginine. Its pathway is amino-acid biosynthesis; L-arginine biosynthesis; L-arginine from L-ornithine and carbamoyl phosphate: step 3/3. This is Argininosuccinate lyase from Bradyrhizobium sp. (strain ORS 278).